The following is an 88-amino-acid chain: Defensin-like protein 267 (88 aa).

Residues 1 to 23 (MMLSKVVLLALLLSLSCLWVAKA) form the signal peptide. 3 disulfides stabilise this stretch: C45–C63, C51–C68, and C55–C70.

It belongs to the DEFL family.

Its subcellular location is the secreted. The protein is Defensin-like protein 267 of Arabidopsis thaliana (Mouse-ear cress).